Here is a 208-residue protein sequence, read N- to C-terminus: dITP/XTP pyrophosphatase (208 aa).

11-16 (SRNWKK) provides a ligand contact to substrate. The Proton acceptor role is filled by D76. Residue D76 coordinates Mg(2+). Substrate contacts are provided by residues S77, 158–161 (FGYD), K184, and 189–190 (HR).

The protein belongs to the HAM1 NTPase family. In terms of assembly, homodimer. Mg(2+) serves as cofactor.

It carries out the reaction XTP + H2O = XMP + diphosphate + H(+). The catalysed reaction is dITP + H2O = dIMP + diphosphate + H(+). The enzyme catalyses ITP + H2O = IMP + diphosphate + H(+). In terms of biological role, pyrophosphatase that catalyzes the hydrolysis of nucleoside triphosphates to their monophosphate derivatives, with a high preference for the non-canonical purine nucleotides XTP (xanthosine triphosphate), dITP (deoxyinosine triphosphate) and ITP. Seems to function as a house-cleaning enzyme that removes non-canonical purine nucleotides from the nucleotide pool, thus preventing their incorporation into DNA/RNA and avoiding chromosomal lesions. This chain is dITP/XTP pyrophosphatase, found in Mycobacterium leprae (strain TN).